Consider the following 74-residue polypeptide: Putative ribosome-binding protein YbzG (74 aa).

The protein is Putative ribosome-binding protein YbzG (ybzG) of Bacillus subtilis (strain 168).